Consider the following 538-residue polypeptide: Pentatricopeptide repeat-containing protein At1g33350 (538 aa).

10 PPR repeats span residues 87-123 (NTHL…SVPR), 125-159 (NHFI…GFHL), 160-191 (YVVV…MSER), 192-226 (NVVS…DVPS), 227-253 (WNAI…MINE), 259-293 (NEVT…DLSS), 294-324 (DVFV…ASKK), 325-359 (SLTA…NIND), 363-398 (DHIT…GIEP), and 399-433 (RIEH…ADEA). The interval 434-509 (IWGSLLNACK…PPGWSRIEID (76 aa)) is type E motif.

This sequence belongs to the PPR family. PCMP-E subfamily.

The chain is Pentatricopeptide repeat-containing protein At1g33350 (PCMP-E57) from Arabidopsis thaliana (Mouse-ear cress).